A 59-amino-acid polypeptide reads, in one-letter code: UPF0391 membrane protein lpl2443 (59 aa).

Helical transmembrane passes span 5–25 and 30–50; these read ALIF…GIAV and IAKI…IMGL.

It belongs to the UPF0391 family.

The protein localises to the cell membrane. This chain is UPF0391 membrane protein lpl2443, found in Legionella pneumophila (strain Lens).